We begin with the raw amino-acid sequence, 673 residues long: F420-dependent formate dehydrogenase subunit alpha (673 aa).

Residues 3-59 (FKIVNTICPYCGVGCGLGLVVKDGRVIGIHPNKRHPINEGKLCAKGNYCYQFIHSKD) enclose the 4Fe-4S Mo/W bis-MGD-type domain. [4Fe-4S] cluster-binding residues include C10, C13, C17, and C45. A non-standard amino acid (selenocysteine) is located at residue U131.

It belongs to the prokaryotic molybdopterin-containing oxidoreductase family. In terms of assembly, dimer of an alpha (FdhA) and a beta (FdhB) subunit. Requires [4Fe-4S] cluster as cofactor. The cofactor is Mo-bis(molybdopterin guanine dinucleotide). Zn(2+) is required as a cofactor.

The enzyme catalyses oxidized coenzyme F420-(gamma-L-Glu)(n) + formate + 2 H(+) = reduced coenzyme F420-(gamma-L-Glu)(n) + CO2. In terms of biological role, catalyzes the oxidation of formate to carbon dioxide, with coenzyme F420 as the electron acceptor. This is F420-dependent formate dehydrogenase subunit alpha (fdhA) from Methanocaldococcus jannaschii (strain ATCC 43067 / DSM 2661 / JAL-1 / JCM 10045 / NBRC 100440) (Methanococcus jannaschii).